We begin with the raw amino-acid sequence, 3081 residues long: Cilia- and flagella-associated protein 54 (3081 aa).

9 disordered regions span residues 542–579 (SGTAGAAPPPPPRRVSMTGMLAGGSASPPNGSSGAGGA), 591–626 (TQTAGSPSHNGGAAGATASAGGGAAGAPPRPQQSSL), 910–942 (PPQPKLLQRSPTSVTLVAHPPGPGLKQPPGARK), 1406–1451 (ADAP…GITP), 1518–1586 (ESIL…YPVV), 1636–1657 (RRAALAASASTAGAGLGEEERP), 2176–2210 (GERTAAPKPASPAKGAAKGAAAAAPEPPGAGLPEP), 2229–2306 (MASG…SQRA), and 2776–2806 (ARPVATSSSGARPPGTPPGGKPGAGGGSGDG). Positions 564–579 (GGSASPPNGSSGAGGA) are enriched in low complexity. The segment covering 1428 to 1449 (MPPPVPDPSAAGPPPLTPPEGI) has biased composition (pro residues). Positions 1538–1550 (GGKDDKKKDDKAP) are enriched in basic and acidic residues. 3 stretches are compositionally biased toward low complexity: residues 1638–1648 (AALAASASTAG), 2181–2199 (APKPASPAKGAAKGAAAAA), and 2240–2269 (EPSSAGKPAAAGKPAPARAPSPGRAKSPTG). Residues 2289–2301 (PEVPGPPPPPPPS) are compositionally biased toward pro residues. Residues 2776–2788 (ARPVATSSSGARP) are compositionally biased toward low complexity. Residues 2796 to 2805 (KPGAGGGSGD) are compositionally biased toward gly residues.

This sequence belongs to the CFAP54 family. In terms of assembly, part of the PDCP1 complex composed of CFAP46, CFAP54, CFAP74 and CFAP221; the PDCP1 complex binds calmodulin.

The protein resides in the cytoplasm. Its subcellular location is the cytoskeleton. It is found in the cilium axoneme. The protein is Cilia- and flagella-associated protein 54 of Chlamydomonas reinhardtii (Chlamydomonas smithii).